Consider the following 62-residue polypeptide: Sperm protamine P1 (62 aa).

A disordered region spans residues 1–62 (MARYRRHSRS…RRYSRRGRRR (62 aa)).

Belongs to the protamine P1 family. In terms of tissue distribution, testis.

It is found in the nucleus. It localises to the chromosome. Functionally, protamines substitute for histones in the chromatin of sperm during the haploid phase of spermatogenesis. They compact sperm DNA into a highly condensed, stable and inactive complex. The polypeptide is Sperm protamine P1 (PRM1) (Pseudantechinus bilarni (Sandstone dibbler)).